Consider the following 2280-residue polypeptide: Protein Ycf2 (2280 aa).

1634-1641 (GSIGTGRS) is an ATP binding site.

The protein belongs to the Ycf2 family.

It localises to the plastid. The protein resides in the chloroplast stroma. Functionally, probable ATPase of unknown function. Its presence in a non-photosynthetic plant (Epifagus virginiana) and experiments in tobacco indicate that it has an essential function which is probably not related to photosynthesis. This is Protein Ycf2 from Eucalyptus globulus subsp. globulus (Tasmanian blue gum).